Here is a 385-residue protein sequence, read N- to C-terminus: Lipid-A-disaccharide synthase (385 aa).

The protein belongs to the LpxB family.

The enzyme catalyses 2-N,3-O-bis[(3R)-3-hydroxytetradecanoyl]-alpha-D-glucosaminyl 1-phosphate + UDP-2-N,3-O-bis[(3R)-3-hydroxytetradecanoyl]-alpha-D-glucosamine = lipid A disaccharide (E. coli) + UDP + H(+). It catalyses the reaction a lipid X + a UDP-2-N,3-O-bis[(3R)-3-hydroxyacyl]-alpha-D-glucosamine = a lipid A disaccharide + UDP + H(+). Its pathway is glycolipid biosynthesis; lipid IV(A) biosynthesis; lipid IV(A) from (3R)-3-hydroxytetradecanoyl-[acyl-carrier-protein] and UDP-N-acetyl-alpha-D-glucosamine: step 5/6. Functionally, condensation of UDP-2,3-diacylglucosamine and 2,3-diacylglucosamine-1-phosphate to form lipid A disaccharide, a precursor of lipid A, a phosphorylated glycolipid that anchors the lipopolysaccharide to the outer membrane of the cell. The protein is Lipid-A-disaccharide synthase of Wigglesworthia glossinidia brevipalpis.